The sequence spans 397 residues: Putative gustatory receptor 85a (397 aa).

Over M1–V56 the chain is Cytoplasmic. The helical transmembrane segment at L57–F77 threads the bilayer. Topologically, residues D78 to T90 are extracellular. Residues L91–M111 traverse the membrane as a helical segment. Over G112–D151 the chain is Cytoplasmic. Residues Y152–F172 form a helical membrane-spanning segment. At T173–C186 the chain is on the extracellular side. A helical transmembrane segment spans residues F187 to I207. Over T208 to R268 the chain is Cytoplasmic. The helical transmembrane segment at N269 to L289 threads the bilayer. Topologically, residues Q290 to E293 are extracellular. The chain crosses the membrane as a helical span at residues L294–V314. At N315–R375 the chain is on the cytoplasmic side. A helical membrane pass occupies residues S376–T396. Residue N397 is a topological domain, extracellular.

The protein belongs to the insect chemoreceptor superfamily. Gustatory receptor (GR) family. Gr22e subfamily.

The protein localises to the cell membrane. Functionally, probable gustatory receptor which mediates acceptance or avoidance behavior, depending on its substrates. The protein is Putative gustatory receptor 85a (Gr85a) of Drosophila melanogaster (Fruit fly).